The primary structure comprises 528 residues: RNA polymerase sigma factor SigA (528 aa).

A compositionally biased stretch (polar residues) spans 1 to 10; sequence MAATKASTAT. The tract at residues 1-211 is disordered; sequence MAATKASTAT…FVWDEDESEA (211 aa). 3 stretches are compositionally biased toward low complexity: residues 19 to 31, 38 to 56, and 80 to 92; these read TKSPAASASGAKT, AKSASGSPPAKRATKPAAR, and AAKSAAAKAPSAR. Positions 100–109 are enriched in basic and acidic residues; that stretch reads APKDAQHEAA. Over residues 110-173 the composition is skewed to acidic residues; the sequence is TDPEDALDSV…DDEDHEDLEA (64 aa). A sigma-70 factor domain-2 region spans residues 295-365; the sequence is LLEANLRLVV…TRAMADQART (71 aa). The Interaction with polymerase core subunit RpoC signature appears at 319–322; sequence DLIQ. The segment at 374-450 is sigma-70 factor domain-3; that stretch reads EVINKLGRIQ…DSEAVVAVDA (77 aa). The segment at 463 to 516 is sigma-70 factor domain-4; it reads VLDTLSEREAGVVRLRFGLTDGQPRTLDEIGQVYGVTRERIRQIESKTMSKLRH. A DNA-binding region (H-T-H motif) is located at residues 489–508; that stretch reads LDEIGQVYGVTRERIRQIES.

The protein belongs to the sigma-70 factor family. RpoD/SigA subfamily. As to quaternary structure, interacts transiently with the RNA polymerase catalytic core.

The protein resides in the cytoplasm. Its function is as follows. Sigma factors are initiation factors that promote the attachment of RNA polymerase to specific initiation sites and are then released. This sigma factor is the primary sigma factor during exponential growth. The chain is RNA polymerase sigma factor SigA from Mycobacterium bovis (strain ATCC BAA-935 / AF2122/97).